We begin with the raw amino-acid sequence, 362 residues long: Cap-specific mRNA (nucleoside-2'-O-)-methyltransferase 1 (362 aa).

One can recognise a RrmJ-type SAM-dependent 2'-O-MTase domain in the interval Ser87–Leu294. S-adenosyl-L-methionine contacts are provided by Gly130 and Asp207. Lys248 (proton acceptor) is an active-site residue.

It localises to the nucleus. It catalyses the reaction a 5'-end (N(7)-methyl 5'-triphosphoguanosine)-ribonucleoside in mRNA + S-adenosyl-L-methionine = a 5'-end (N(7)-methyl 5'-triphosphoguanosine)-(2'-O-methyl-ribonucleoside) in mRNA + S-adenosyl-L-homocysteine + H(+). S-adenosyl-L-methionine-dependent methyltransferase that mediates RNA cap1 2'-O-ribose methylation to the 5'-cap structure of spliced leader and U1 small nuclear RNAs. Methylates the ribose of the first nucleotide of a m(7)GpppG-capped RNA to produce m(7)GpppNmp (cap1). Cap1 modification is linked to higher levels of translation. Recognizes a guanosine cap on RNA independent of its N(7) methylation status. The sequence is that of Cap-specific mRNA (nucleoside-2'-O-)-methyltransferase 1 from Trypanosoma cruzi (strain CL Brener).